We begin with the raw amino-acid sequence, 545 residues long: Sphingomyelin phosphodiesterase 5 (545 aa).

The transit peptide at 1–35 (MSLRESPFPNGFLEGLHAVGWGLIFPCFWFLDRLI) directs the protein to the mitochondrion. Residues 36–64 (AVCISTTLERMWRLEQECYLHPLKVVFGS) lie on the Mitochondrial matrix side of the membrane. Residues 65-85 (ILFFILFVISTPFALLGFILW) traverse the membrane as a helical; Signal-anchor for type II membrane protein segment. At 86–545 (APLQAIRRPF…LSVSLDSEQN (460 aa)) the chain is on the mitochondrial intermembrane side. E258 is a binding site for Mg(2+). H529 functions as the Proton acceptor in the catalytic mechanism.

The protein belongs to the neutral sphingomyelinase family. Mg(2+) serves as cofactor. It depends on Mn(2+) as a cofactor.

The protein localises to the mitochondrion inner membrane. The protein resides in the endoplasmic reticulum membrane. It carries out the reaction a sphingomyelin + H2O = phosphocholine + an N-acylsphing-4-enine + H(+). The enzyme catalyses N-(hexadecanoyl)-sphing-4-enine-1-phosphocholine + H2O = N-hexadecanoylsphing-4-enine + phosphocholine + H(+). It functions in the pathway lipid metabolism; sphingolipid metabolism. Activated by the phospholipids cardiolipin, phosphatidylserine, and phosphatidylethanolamine. Strongest activation with cardiolipin. In terms of biological role, catalyzes the hydrolysis of membrane sphingomyelin to form phosphorylcholine and ceramide. This is Sphingomyelin phosphodiesterase 5 from Danio rerio (Zebrafish).